The sequence spans 164 residues: SsrA-binding protein (164 aa).

Belongs to the SmpB family.

The protein localises to the cytoplasm. Required for rescue of stalled ribosomes mediated by trans-translation. Binds to transfer-messenger RNA (tmRNA), required for stable association of tmRNA with ribosomes. tmRNA and SmpB together mimic tRNA shape, replacing the anticodon stem-loop with SmpB. tmRNA is encoded by the ssrA gene; the 2 termini fold to resemble tRNA(Ala) and it encodes a 'tag peptide', a short internal open reading frame. During trans-translation Ala-aminoacylated tmRNA acts like a tRNA, entering the A-site of stalled ribosomes, displacing the stalled mRNA. The ribosome then switches to translate the ORF on the tmRNA; the nascent peptide is terminated with the 'tag peptide' encoded by the tmRNA and targeted for degradation. The ribosome is freed to recommence translation, which seems to be the essential function of trans-translation. The polypeptide is SsrA-binding protein (Corynebacterium glutamicum (strain R)).